Reading from the N-terminus, the 1474-residue chain is SH3 and multiple ankyrin repeat domains protein 2 (1474 aa).

Residues 66–76 (LSPQLLQQTPS) show a composition bias toward polar residues. The tract at residues 66 to 125 (LSPQLLQQTPSKPDGATKSLGSYAPGPRSRSPSLNRLGGAGEDGKRPQPPHWHVGSPFTP) is disordered. The SH3 domain occupies 148–207 (VPGRLFVAIKPYQPQVDGEIPLHRGDRVKVLSIGEGGFWEGSARGHIGWFPAECVEEVQC). Position 162 is a phosphoserine (Q162). A PDZ domain is found at 248–342 (TVVLQKKDNE…HLVLKVVTVT (95 aa)). S373 is subject to Phosphoserine. The interval 392-413 (RKKKDKPEEIVPASKPSRTAEN) is disordered. S457 carries the phosphoserine modification. T486 carries the phosphothreonine modification. Residues 504–534 (LSMPDTSEDIPPPPQSVPPSPPPPSPTTYNC) are disordered. Pro residues predominate over residues 513–529 (IPPPPQSVPPSPPPPSP). Phosphoserine is present on S586. Disordered stretches follow at residues 659-920 (TIIV…ADDK), 947-995 (PVAG…PAAA), and 1057-1153 (PALA…ESMD). A compositionally biased stretch (low complexity) spans 666–678 (STSSSGKSSQGSS). Over residues 711–722 (VRDREKRLEARR) the composition is skewed to basic and acidic residues. S724 is modified (phosphoserine). Gly residues predominate over residues 783 to 795 (LGGGEAGAQGEAG). Composition is skewed to low complexity over residues 811 to 823 (PAAA…PASP) and 833 to 846 (RLLD…LALS). Basic and acidic residues-rich tracts occupy residues 847 to 868 (ARDR…KADL) and 899 to 920 (RRQE…ADDK). T903 bears the Phosphothreonine mark. Residues 1075–1085 (SLNSSQPANST) show a composition bias toward polar residues. A compositionally biased stretch (basic and acidic residues) spans 1119 to 1130 (VDSRSSSDHHLE). Positions 1131–1151 (TTSTISTVSSISTLSSEGGES) are enriched in low complexity. Positions 1169–1175 (PPVPPKP) match the SH3-binding motif. Disordered regions lie at residues 1195 to 1216 (EDTD…SAQA) and 1260 to 1401 (NRGK…ISNK). Pro residues predominate over residues 1202 to 1212 (IPPPAPPPPPG). The span at 1291 to 1305 (STVSGTRSTTVTFTV) shows a compositional bias: low complexity. T1292 carries an O-linked (GlcNAc) threonine glycan. The segment covering 1307 to 1317 (PGTSQPITLQS) has biased composition (polar residues). S1334 and S1338 each carry phosphoserine. 2 stretches are compositionally biased toward low complexity: residues 1352-1363 (SAAAASPSPTLS) and 1385-1399 (RSRS…QPIS). In terms of domain architecture, SAM spans 1411-1474 (WTKPDVADWL…ERALKQLLDR (64 aa)).

The protein belongs to the SHANK family. As to quaternary structure, is part of a complex with DLG4/PSD-95 and DLGAP1/GKAP. Interacts with CTTN/cortactin SH3 domain, DLGAP1/GKAP and alpha-latrotoxin receptor 1. Interacts with DNM2, DBNL, GRID2, BAIAP2, SLC9A3, PLCB3 and CFTR. Interacts with ABI1 (via SH3 domain). Interacts (via proline-rich region) with PDE4D isoform 5 (via N-terminal region). Interacts with PDE4D isoform 33, isoform 4, isoform 7, isoform 8 and isoform 9 but not isoform 32 and isoform 6. Interacts weakly with PDE4D isoform 31. Interacts with ABI1. As to expression, expressed in epithelial cells (at protein level). All isoforms except isoform 7 are expressed predominantly in brain, with highest levels in olfactory bulb, cerebral cortex, cerebellum, central gray matter and hippocampus. Moderate levels of expression are seen in the caudate putamen, thalamic nuclei and brain stem. In cerebellum primarily expressed in Purkinje cells. Isoform 7 is not expressed in brain but expressed in liver, cholangiocytes and thymus. Isoform 7 is present in pancreas, colonic mucosa and thymocytes (at protein level).

Its subcellular location is the apical cell membrane. The protein localises to the cytoplasm. The protein resides in the synapse. It localises to the postsynaptic density. It is found in the cell projection. Its subcellular location is the growth cone. The protein localises to the dendritic spine. Functionally, seems to be an adapter protein in the postsynaptic density (PSD) of excitatory synapses that interconnects receptors of the postsynaptic membrane including NMDA-type and metabotropic glutamate receptors, and the actin-based cytoskeleton. May play a role in the structural and functional organization of the dendritic spine and synaptic junction. This Rattus norvegicus (Rat) protein is SH3 and multiple ankyrin repeat domains protein 2 (Shank2).